A 111-amino-acid polypeptide reads, in one-letter code: Fluoride-specific ion channel FluC (111 aa).

3 helical membrane passes run 2–22 (GLLLLLVGIGGGFGAMARFAL), 36–56 (GILLCNIIGSLIIGMMAAFLI), and 71–91 (FLLVTGFLGGFTTFSSFSLDI). Glycine 79 and threonine 82 together coordinate Na(+).

Belongs to the fluoride channel Fluc/FEX (TC 1.A.43) family.

It localises to the cell inner membrane. The catalysed reaction is fluoride(in) = fluoride(out). Na(+) is not transported, but it plays an essential structural role and its presence is essential for fluoride channel function. Fluoride-specific ion channel. Important for reducing fluoride concentration in the cell, thus reducing its toxicity. The protein is Fluoride-specific ion channel FluC of Francisella tularensis subsp. holarctica (strain FTNF002-00 / FTA).